The chain runs to 225 residues: Insulin-induced gene 2 protein (225 aa).

Residues 1-28 (MAEGETESPRPKKRGPYISSVTSQSVNV) are Cytoplasmic-facing. The helical transmembrane segment at 29-51 (VIRGVVLFFIGVFLALVLNLLQI) threads the bilayer. Residues 52 to 70 (QRNVTLFPPDVITSIFSSA) lie on the Lumenal side of the membrane. A helical transmembrane segment spans residues 71 to 88 (WWVPPCCGTASAVIGLLY). Topologically, residues 89–103 (PCIDRHLGEPHKFKR) are cytoplasmic. The helical transmembrane segment at 104-126 (EWSSVMRCVAVFVGINHASAKVD) threads the bilayer. The Lumenal segment spans residues 127–129 (FDN). A helical membrane pass occupies residues 130-148 (NFQFSLTLAALSVGLWWTF). Residues 149-153 (DRSRS) are Cytoplasmic-facing. At serine 151 the chain carries Phosphoserine. A helical transmembrane segment spans residues 154-175 (GFGLGVGIAFLATVVTQLLVYN). Over 176 to 189 (GVYQYTSPDFLYVR) the chain is Lumenal. The chain crosses the membrane as a helical span at residues 190–207 (SWLPCIFFAGGITMGNIG). Topologically, residues 208–225 (RQLAMYECKVIAEKSHQE) are cytoplasmic. Cysteine 215 carries the cysteine sulfenic acid (-SOH); alternate modification. Cysteine 215 is covalently cross-linked (Glycyl cysteine thioester (Cys-Gly) (interchain with G-Cter in ubiquitin); alternate). The KxHxx motif lies at 219–225 (AEKSHQE).

Belongs to the INSIG family. Interacts with SCAP; interaction is direct and only takes place in the presence of sterols; it prevents interaction between SCAP and the coat protein complex II (COPII). Associates with the SCAP-SREBP complex (composed of SCAP and SREBF1/SREBP1 or SREBF2/SREBP2); association is mediated via its interaction with SCAP and only takes place in the presence of sterols. Interacts with RNF139. Interacts with RNF145. Phosphorylation at Ser-151 by PCK1 reduces binding to oxysterol, disrupting the interaction between INSIG2 and SCAP, thereby promoting nuclear translocation of SREBP proteins (SREBF1/SREBP1 or SREBF2/SREBP2) and subsequent transcription of downstream lipogenesis-related genes. In terms of processing, polyubiquitinated by AMFR/gp78 at Cys-215 in some tissues such as adipose tissues, undifferentiated myoblasts and liver, leading to its degradation. In differentiated myotubes, Cys-215 oxidation prevents ubiquitination at the same site, resulting in protein stabilization. Post-translationally, oxidized at Cys-215 in differentiated myotubes, preventing ubiquitination at the same site, and resulting in protein stabilization.

It localises to the endoplasmic reticulum membrane. In terms of biological role, oxysterol-binding protein that mediates feedback control of cholesterol synthesis by controlling both endoplasmic reticulum to Golgi transport of SCAP and degradation of HMGCR. Acts as a negative regulator of cholesterol biosynthesis by mediating the retention of the SCAP-SREBP complex in the endoplasmic reticulum, thereby blocking the processing of sterol regulatory element-binding proteins (SREBPs) SREBF1/SREBP1 and SREBF2/SREBP2. Binds oxysterol, including 22-hydroxycholesterol, 24-hydroxycholesterol, 25-hydroxycholesterol and 27-hydroxycholesterol, regulating interaction with SCAP and retention of the SCAP-SREBP complex in the endoplasmic reticulum. In presence of oxysterol, interacts with SCAP, retaining the SCAP-SREBP complex in the endoplasmic reticulum, thereby preventing SCAP from escorting SREBF1/SREBP1 and SREBF2/SREBP2 to the Golgi. Sterol deprivation or phosphorylation by PCK1 reduce oxysterol-binding, disrupting the interaction between INSIG2 and SCAP, thereby promoting Golgi transport of the SCAP-SREBP complex, followed by processing and nuclear translocation of SREBF1/SREBP1 and SREBF2/SREBP2. Also regulates cholesterol synthesis by regulating degradation of HMGCR: initiates the sterol-mediated ubiquitin-mediated endoplasmic reticulum-associated degradation (ERAD) of HMGCR via recruitment of the reductase to the ubiquitin ligase RNF139. In Rattus norvegicus (Rat), this protein is Insulin-induced gene 2 protein.